A 419-amino-acid chain; its full sequence is MKKMLIQGGNLLSGEVTIGGAKNSTVAIIPAAILAESKVVLDSVPHIKDVNSLLSILEDMSVTSTFTGDTVEIDPTNIVSTPLPSGKIQSLRASYYFMGALLGRFGKAIVGLPGGDDIGPRPIDQHIKGFEALGAVVTNNHGAIEINAPEGLHGAKIYLDMASVGATINLLLAAVRAEGQTVIENAAREPEIVDIATFLNNMGAKVRGAGTDIIRIEGVAHLYGHNTHTIIPDRIEAGTYLSMAAAIGDGVNVKNIISEHMDAYLAKLEEMGVKMDVKEDSIFVYPSPDLKMVQVKTMPYPGFATDLQQPLTPLLLKAQGEGLVVDTLYPKRTRHVPELIRMGADISIENDVILLHHADKLQGAEVSADEIRGGACLMIAGLMANGVTTITNASNILRGYDRVIDKLTGLGAVVKMVEE.

Phosphoenolpyruvate is bound at residue 22–23 (KN). R92 lines the UDP-N-acetyl-alpha-D-glucosamine pocket. D116 functions as the Proton donor in the catalytic mechanism. Residues 121–125 (RPIDQ), D306, and L328 contribute to the UDP-N-acetyl-alpha-D-glucosamine site.

The protein belongs to the EPSP synthase family. MurA subfamily.

It is found in the cytoplasm. It catalyses the reaction phosphoenolpyruvate + UDP-N-acetyl-alpha-D-glucosamine = UDP-N-acetyl-3-O-(1-carboxyvinyl)-alpha-D-glucosamine + phosphate. It functions in the pathway cell wall biogenesis; peptidoglycan biosynthesis. In terms of biological role, cell wall formation. Adds enolpyruvyl to UDP-N-acetylglucosamine. This chain is UDP-N-acetylglucosamine 1-carboxyvinyltransferase 2, found in Latilactobacillus sakei subsp. sakei (strain 23K) (Lactobacillus sakei subsp. sakei).